The sequence spans 323 residues: o-succinylbenzoate synthase (323 aa).

The active-site Proton donor is the Lys134. Mg(2+) contacts are provided by Asp162, Glu191, and Asp214. Lys236 acts as the Proton acceptor in catalysis.

The protein belongs to the mandelate racemase/muconate lactonizing enzyme family. MenC type 1 subfamily. The cofactor is a divalent metal cation.

It catalyses the reaction (1R,6R)-6-hydroxy-2-succinyl-cyclohexa-2,4-diene-1-carboxylate = 2-succinylbenzoate + H2O. It participates in quinol/quinone metabolism; 1,4-dihydroxy-2-naphthoate biosynthesis; 1,4-dihydroxy-2-naphthoate from chorismate: step 4/7. Its pathway is quinol/quinone metabolism; menaquinone biosynthesis. Functionally, converts 2-succinyl-6-hydroxy-2,4-cyclohexadiene-1-carboxylate (SHCHC) to 2-succinylbenzoate (OSB). The protein is o-succinylbenzoate synthase of Yersinia pseudotuberculosis serotype I (strain IP32953).